Here is a 540-residue protein sequence, read N- to C-terminus: Signal peptide peptidase-like 2 (540 aa).

An N-terminal signal peptide occupies residues 1–27; it reads MDSLRFLRILLLSSSILLLSLRSTVTA. At 28–196 the chain is on the lumenal side; sequence GDIVHQDNLA…PRRPAVDVAE (169 aa). A glycan (N-linked (GlcNAc...) asparagine) is linked at Asn-83. A PA domain is found at 95-173; sequence SCTPLKNKLS…QDAGASLQKM (79 aa). An N-linked (GlcNAc...) asparagine glycan is attached at Asn-176. The helical transmembrane segment at 197–217 threads the bilayer; the sequence is VFLWLMAIGTILCASYWSAWS. Residues 218–248 are Cytoplasmic-facing; it reads AREAAIEHDKLLKDAIDEIPNTNDGGSGVVE. The helical transmembrane segment at 249–269 threads the bilayer; it reads INSISAIFFVVLASGFLVILY. Residues 270 to 278 are Lumenal-facing; it reads KLMSYWFVE. A helical transmembrane segment spans residues 279-299; the sequence is LLVVVFCIGGVEGLQTCLVAL. Topologically, residues 300-319 are cytoplasmic; that stretch reads LSRWFQRAADTYVKVPFLGP. A helical transmembrane segment spans residues 320 to 340; that stretch reads ISYLTLAVSPFCIVFAVLWAV. Over 341 to 345 the chain is Lumenal; that stretch reads YRVHS. A helical transmembrane segment spans residues 346-366; the sequence is FAWIGQDVLGIALIITVLQIV. Over 367–370 the chain is Cytoplasmic; sequence HVPN. A helical transmembrane segment spans residues 371-391; the sequence is LKVGTVLLSCAFLYDIFWVFV. Asp-385 is an active-site residue. Over 392-429 the chain is Lumenal; the sequence is SKKLFHESVMIVVARGDKSGEDGIPMLLKIPRMFDPWG. A helical membrane pass occupies residues 430–450; it reads GYSIIGFGDILLPGLLIAFAL. Residue Asp-438 is part of the active site. Topologically, residues 451–462 are cytoplasmic; the sequence is RYDWLANKTLRT. The helical transmembrane segment at 463–483 threads the bilayer; that stretch reads GYFIWAMVAYGLGLLITYVAL. The Lumenal portion of the chain corresponds to 484-488; the sequence is NLMDG. The helical transmembrane segment at 489 to 509 threads the bilayer; sequence HGQPALLYIVPFTLGTMLTLA. Residues 492-494 carry the PAL motif; that stretch reads PAL. The Cytoplasmic segment spans residues 510 to 540; sequence RKRDDLWILWTKGEPERACPHHVRLEQCSEK.

This sequence belongs to the peptidase A22B family. Post-translationally, glycosylated. In terms of tissue distribution, ubiquitous.

The protein localises to the endosome membrane. In terms of biological role, intramembrane-cleaving aspartic protease (I-CLiP) that cleaves type II membrane signal peptides in the hydrophobic plane of the membrane. The sequence is that of Signal peptide peptidase-like 2 (SPPL2) from Arabidopsis thaliana (Mouse-ear cress).